Here is a 276-residue protein sequence, read N- to C-terminus: Dermonecrotic toxin LafSicTox-betaIE2 (276 aa).

His-5 is an active-site residue. Positions 25 and 27 each coordinate Mg(2+). The Nucleophile role is filled by His-41. Intrachain disulfides connect Cys-45–Cys-51 and Cys-47–Cys-189. Asp-85 is a binding site for Mg(2+).

This sequence belongs to the arthropod phospholipase D family. Class II subfamily. Mg(2+) is required as a cofactor. Expressed by the venom gland.

It localises to the secreted. It catalyses the reaction an N-(acyl)-sphingosylphosphocholine = an N-(acyl)-sphingosyl-1,3-cyclic phosphate + choline. The catalysed reaction is an N-(acyl)-sphingosylphosphoethanolamine = an N-(acyl)-sphingosyl-1,3-cyclic phosphate + ethanolamine. It carries out the reaction a 1-acyl-sn-glycero-3-phosphocholine = a 1-acyl-sn-glycero-2,3-cyclic phosphate + choline. The enzyme catalyses a 1-acyl-sn-glycero-3-phosphoethanolamine = a 1-acyl-sn-glycero-2,3-cyclic phosphate + ethanolamine. Its function is as follows. Dermonecrotic toxins cleave the phosphodiester linkage between the phosphate and headgroup of certain phospholipids (sphingolipid and lysolipid substrates), forming an alcohol (often choline) and a cyclic phosphate. This toxin acts on sphingomyelin (SM). It may also act on ceramide phosphoethanolamine (CPE), lysophosphatidylcholine (LPC) and lysophosphatidylethanolamine (LPE), but not on lysophosphatidylserine (LPS), and lysophosphatidylglycerol (LPG). It acts by transphosphatidylation, releasing exclusively cyclic phosphate products as second products. Induces dermonecrosis, hemolysis, increased vascular permeability, edema, inflammatory response, and platelet aggregation. This is Dermonecrotic toxin LafSicTox-betaIE2 from Loxosceles aff. spinulosa (strain GJB-2008) (Recluse spider).